The following is a 690-amino-acid chain: Xylosyl- and glucuronyltransferase LARGE2 (690 aa).

The Cytoplasmic segment spans residues 1 to 8 (MLPRGRPR). Residues 9-29 (AMGAAVLLLLLLLVVGFFLFG) traverse the membrane as a helical; Signal-anchor for type II membrane protein segment. Over 30–690 (RDPDYGLGTT…TALQQARSRA (661 aa)) the chain is Lumenal. N-linked (GlcNAc...) asparagine glycosylation is found at asparagine 51 and asparagine 78. The interval 68 to 343 (LHVAIVCAGY…FLGYDGKLLR (276 aa)) is xylosyltransferase activity. Mn(2+) contacts are provided by aspartate 172 and aspartate 174. The N-linked (GlcNAc...) asparagine glycan is linked to asparagine 202. Positions 344 to 686 (RELFGCPNQF…LKYLTALQQA (343 aa)) are glucuronyltransferase activity. Mn(2+)-binding residues include aspartate 492 and aspartate 494.

It in the C-terminal section; belongs to the glycosyltransferase 49 family. The protein in the N-terminal section; belongs to the glycosyltransferase 8 family. Belongs to the glycosyltransferase 8 family. Interacts with B4GAT1. Mn(2+) is required as a cofactor. In terms of tissue distribution, highly expressed in the testis and kidney, but weakly expressed in the heart and brain. Expressed during embryogenesis from 7 dpc.

It is found in the golgi apparatus membrane. It carries out the reaction 3-O-[beta-D-GlcA-(1-&gt;3)-beta-D-Xyl-(1-&gt;4)-Rib-ol-P-Rib-ol-P-3-beta-D-GalNAc-(1-&gt;3)-beta-D-GlcNAc-(1-&gt;4)-(O-6-P-alpha-D-Man)]-Thr-[protein] + UDP-alpha-D-xylose = 3-O-[alpha-D-Xyl-(1-&gt;3)-beta-D-GlcA-(1-&gt;4)-beta-D-Xyl-(1-&gt;4)-Rib-ol-P-Rib-ol-P-3-beta-D-GalNAc-(1-&gt;3)-beta-D-GlcNAc-(1-&gt;4)-(O-6-P-alpha-D-Man)]-Thr-[protein] + UDP + H(+). It catalyses the reaction 3-O-{(1-&gt;[3)-alpha-D-Xyl-(1-&gt;3)-beta-D-GlcA-(1-&gt;](n)-4)-beta-D-Xyl-(1-&gt;4)-Rib-ol-P-Rib-ol-P-3-beta-D-GalNAc-(1-&gt;3)-beta-D-GlcNAc-(1-&gt;4)-O-6-P-alpha-D-Man}-L-Thr-[protein] + UDP-alpha-D-glucuronate = 3-O-{beta-D-GlcA-(1-&gt;[3)-alpha-D-Xyl-(1-&gt;3)-beta-D-GlcA-(1-&gt;](n)-4)-beta-D-Xyl-(1-&gt;4)-Rib-ol-P-Rib-ol-P-3-beta-D-GalNAc-(1-&gt;3)-beta-D-GlcNAc-(1-&gt;4)-O-6-P-alpha-D-Man}-L-Thr-[protein] + UDP + H(+). The catalysed reaction is 3-O-{beta-D-GlcA-(1-&gt;[3)-alpha-D-Xyl-(1-&gt;3)-beta-D-GlcA-(1-&gt;](n)-4)-beta-D-Xyl-(1-&gt;4)-Rib-ol-P-Rib-ol-P-3-beta-D-GalNAc-(1-&gt;3)-beta-D-GlcNAc-(1-&gt;4)-O-6-P-alpha-D-Man}-L-Thr-[protein] + UDP-alpha-D-xylose = 3-O-{(1-&gt;[3)-alpha-D-Xyl-(1-&gt;3)-beta-D-GlcA-(1-&gt;](n+1)-4)-beta-D-Xyl-(1-&gt;4)-Rib-ol-P-Rib-ol-P-3-beta-D-GalNAc-(1-&gt;3)-beta-D-GlcNAc-(1-&gt;4)-O-6-P-alpha-D-Man}-L-Thr-[protein] + UDP + H(+). The protein operates within protein modification; protein glycosylation. In terms of biological role, bifunctional glycosyltransferase with both alpha-1,3-xylosyltransferase and beta-1,3-glucuronyltransferase activities involved in the maturation of alpha-dystroglycan (DAG1) by glycosylation leading to DAG1 binding to laminin G-like domain-containing extracellular proteins with high affinity and in a phosphorylated-O-mannosyl trisaccharide dependent manner. Elongates the glucuronyl-beta-1,4-xylose-beta disaccharide primer structure by adding repeating units [-3-Xylose-alpha-1,3-GlcA-beta-1-] to produce a heteropolysaccharide. Supports the maturation of DAG1 more effectively than LARGE1. In addition, can modify both heparan sulfate (HS)- and chondroitin/dermatan sulfate (CS/DS)-proteoglycans (PGs), namely GPC4, with a glycosaminoglycan (GAG)-like polysaccharide composed of xylose and glucuronic acid to confer laminin binding. In Mus musculus (Mouse), this protein is Xylosyl- and glucuronyltransferase LARGE2.